A 1492-amino-acid polypeptide reads, in one-letter code: Neogenin (1492 aa).

Positions 1–36 (MAAEREAGRLLCTSSSRRCCPPPPLLLLLPLLLLLG) are cleaved as a signal peptide. At 37-1136 (RPASGAAATK…PTSPLDSNML (1100 aa)) the chain is on the extracellular side. Ig-like C2-type domains follow at residues 63-158 (PFYF…AKLT), 163-249 (PRFT…AELK), 254-347 (PEEI…AELT), and 352-437 (PGFL…AQLI). N-linked (GlcNAc...) asparagine glycosylation occurs at Asn84. 3 disulfide bridges follow: Cys85-Cys140, Cys184-Cys232, and Cys281-Cys331. Asn221 carries N-linked (GlcNAc...) asparagine glycosylation. The N-linked (GlcNAc...) asparagine glycan is linked to Asn337. A disulfide bridge links Cys373 with Cys421. 6 consecutive Fibronectin type-III domains span residues 472-566 (APRD…TQPE), 572-662 (PAPN…TLSD), 667-762 (APQN…TFES), 772-862 (VPSS…RPHT), 887-986 (PPVG…LVPT), and 988-1085 (PPKD…TPKA). Asn501 and Asn520 each carry an N-linked (GlcNAc...) asparagine glycan. Asn670 and Asn746 each carry an N-linked (GlcNAc...) asparagine glycan. Asn940 carries an N-linked (GlcNAc...) asparagine glycan. A disordered region spans residues 1072-1128 (GPMSEAVQFRTPKADSSDKMPNDQALGSAGKGSRLPDLGSDYKPPMSGSNSPHGSPT). Residues 1083 to 1092 (PKADSSDKMP) are compositionally biased toward basic and acidic residues. Over residues 1118-1128 (SGSNSPHGSPT) the composition is skewed to polar residues. The chain crosses the membrane as a helical span at residues 1137 to 1157 (LVIIVSVGVITIVVVVVIAVF). Residues 1158–1492 (CTRRTTSHQK…MKDLNAITTA (335 aa)) lie on the Cytoplasmic side of the membrane. Disordered stretches follow at residues 1205–1237 (PIDK…SMDS), 1266–1300 (PKMM…HSSS), and 1321–1396 (SMSL…FAVP). Phosphoserine occurs at positions 1209 and 1225. The span at 1222–1237 (PRNSQDITPVDNSMDS) shows a compositional bias: polar residues. Phosphothreonine is present on Thr1229. 2 stretches are compositionally biased toward polar residues: residues 1321 to 1353 (SMSL…TCCT) and 1361 to 1380 (ATSS…QSLP). Ser1432 is modified (phosphoserine). Thr1435 bears the Phosphothreonine mark. A phosphoserine mark is found at Ser1463, Ser1465, and Ser1466.

This sequence belongs to the immunoglobulin superfamily. DCC family. In terms of assembly, interacts with BMP2, BMP4, BMP6, and BMP7. Interacts with RGMA and RGMB. Interacts with MYO10. As to expression, widely expressed.

Its subcellular location is the cell membrane. Its function is as follows. Multi-functional cell surface receptor regulating cell adhesion in many diverse developmental processes, including neural tube and mammary gland formation, myogenesis and angiogenesis. Receptor for members of the BMP, netrin, and repulsive guidance molecule (RGM) families. Netrin-Neogenin interactions result in a chemoattractive axon guidance response and cell-cell adhesion, the interaction between NEO1/Neogenin and RGMa and RGMb induces a chemorepulsive response. The protein is Neogenin of Mus musculus (Mouse).